Reading from the N-terminus, the 276-residue chain is NADPH-dependent 7-cyano-7-deazaguanine reductase (276 aa).

83–85 (IES) lines the substrate pocket. Residue 85–86 (SK) participates in NADPH binding. The active-site Thioimide intermediate is C184. The active-site Proton donor is the D191. Residue 223–224 (HE) coordinates substrate. 252-253 (RG) contacts NADPH.

The protein belongs to the GTP cyclohydrolase I family. QueF type 2 subfamily. Homodimer.

The protein localises to the cytoplasm. The catalysed reaction is 7-aminomethyl-7-carbaguanine + 2 NADP(+) = 7-cyano-7-deazaguanine + 2 NADPH + 3 H(+). It participates in tRNA modification; tRNA-queuosine biosynthesis. Catalyzes the NADPH-dependent reduction of 7-cyano-7-deazaguanine (preQ0) to 7-aminomethyl-7-deazaguanine (preQ1). This is NADPH-dependent 7-cyano-7-deazaguanine reductase from Pseudomonas savastanoi pv. phaseolicola (strain 1448A / Race 6) (Pseudomonas syringae pv. phaseolicola (strain 1448A / Race 6)).